Consider the following 490-residue polypeptide: Betaine aldehyde dehydrogenase (490 aa).

Serine 26, isoleucine 27, and aspartate 93 together coordinate K(+). NAD(+) is bound at residue 150 to 152 (GAW). Catalysis depends on lysine 162, which acts as the Charge relay system. 176–179 (KPSE) lines the NAD(+) pocket. Valine 180 contributes to the K(+) binding site. An NAD(+)-binding site is contributed by 230 to 233 (GTVT). Residue leucine 246 participates in K(+) binding. The active-site Proton acceptor is the glutamate 252. Glycine 254, cysteine 286, and glutamate 387 together coordinate NAD(+). Residue cysteine 286 is the Nucleophile of the active site. Position 286 is a cysteine sulfenic acid (-SOH) (cysteine 286). K(+) contacts are provided by lysine 457 and glycine 460. Residue glutamate 464 is the Charge relay system of the active site.

This sequence belongs to the aldehyde dehydrogenase family. Dimer of dimers. The cofactor is K(+).

It catalyses the reaction betaine aldehyde + NAD(+) + H2O = glycine betaine + NADH + 2 H(+). It functions in the pathway amine and polyamine biosynthesis; betaine biosynthesis via choline pathway; betaine from betaine aldehyde: step 1/1. Involved in the biosynthesis of the osmoprotectant glycine betaine. Catalyzes the irreversible oxidation of betaine aldehyde to the corresponding acid. This Ectopseudomonas mendocina (strain ymp) (Pseudomonas mendocina) protein is Betaine aldehyde dehydrogenase.